Here is a 463-residue protein sequence, read N- to C-terminus: Cysteine--tRNA ligase (463 aa).

C29 contributes to the Zn(2+) binding site. The 'HIGH' region motif lies at 31 to 41; it reads ATPQTQPHIGH. C212, H237, and E241 together coordinate Zn(2+). The 'KMSKS' region signature appears at 268 to 272; the sequence is KMSKS. K271 contributes to the ATP binding site.

The protein belongs to the class-I aminoacyl-tRNA synthetase family. Monomer. Zn(2+) serves as cofactor.

The protein localises to the cytoplasm. It catalyses the reaction tRNA(Cys) + L-cysteine + ATP = L-cysteinyl-tRNA(Cys) + AMP + diphosphate. The sequence is that of Cysteine--tRNA ligase from Corynebacterium diphtheriae (strain ATCC 700971 / NCTC 13129 / Biotype gravis).